Here is an 88-residue protein sequence, read N- to C-terminus: Cell division topological specificity factor (88 aa).

The protein belongs to the MinE family.

Its function is as follows. Prevents the cell division inhibition by proteins MinC and MinD at internal division sites while permitting inhibition at polar sites. This ensures cell division at the proper site by restricting the formation of a division septum at the midpoint of the long axis of the cell. In Citrobacter koseri (strain ATCC BAA-895 / CDC 4225-83 / SGSC4696), this protein is Cell division topological specificity factor.